Here is a 202-residue protein sequence, read N- to C-terminus: Imidazoleglycerol-phosphate dehydratase (202 aa).

This sequence belongs to the imidazoleglycerol-phosphate dehydratase family.

Its subcellular location is the cytoplasm. It catalyses the reaction D-erythro-1-(imidazol-4-yl)glycerol 3-phosphate = 3-(imidazol-4-yl)-2-oxopropyl phosphate + H2O. The protein operates within amino-acid biosynthesis; L-histidine biosynthesis; L-histidine from 5-phospho-alpha-D-ribose 1-diphosphate: step 6/9. This chain is Imidazoleglycerol-phosphate dehydratase, found in Brucella anthropi (strain ATCC 49188 / DSM 6882 / CCUG 24695 / JCM 21032 / LMG 3331 / NBRC 15819 / NCTC 12168 / Alc 37) (Ochrobactrum anthropi).